Here is a 267-residue protein sequence, read N- to C-terminus: Undecaprenyl-diphosphatase (267 aa).

Helical transmembrane passes span Met-1–Ile-21, Gln-39–Phe-59, Ser-83–Phe-103, Leu-111–Val-131, Ala-149–Ile-169, Phe-189–Met-209, Leu-218–Leu-238, and Met-246–Leu-266.

The protein belongs to the UppP family.

The protein localises to the cell inner membrane. It catalyses the reaction di-trans,octa-cis-undecaprenyl diphosphate + H2O = di-trans,octa-cis-undecaprenyl phosphate + phosphate + H(+). Functionally, catalyzes the dephosphorylation of undecaprenyl diphosphate (UPP). Confers resistance to bacitracin. This chain is Undecaprenyl-diphosphatase, found in Aliivibrio fischeri (strain MJ11) (Vibrio fischeri).